The primary structure comprises 632 residues: Chaperone protein DnaK (632 aa).

Thr199 carries the phosphothreonine; by autocatalysis modification. Positions 597–611 are enriched in low complexity; it reads AAQQAGQAEGQAAQE. A disordered region spans residues 597 to 632; it reads AAQQAGQAEGQAAQEPSQSTGNAQAEATDAEYEEVK. Residues 612–621 are compositionally biased toward polar residues; it reads PSQSTGNAQA.

The protein belongs to the heat shock protein 70 family.

In terms of biological role, acts as a chaperone. The sequence is that of Chaperone protein DnaK from Amoebophilus asiaticus (strain 5a2).